The following is a 715-amino-acid chain: Patatin-like phospholipase domain-containing protein ATEG_02594 (715 aa).

The helical transmembrane segment at 84 to 104 threads the bilayer; that stretch reads WPFLAFVLGWISFLGVAYILT. A PNPLA domain is found at 274 to 465; the sequence is LCLSGGATFA…RTDIPIKALN (192 aa). Positions 305-309 match the GXSXG motif; it reads GTSGG. Ser307 (nucleophile) is an active-site residue. The Proton acceptor role is filled by Asp452. The segment at 613 to 715 is disordered; sequence TAPRGGGRAT…DVDSDTWKGQ (103 aa). Basic and acidic residues predominate over residues 652 to 661; it reads RTGEYSKEAD. Positions 665-678 are enriched in polar residues; sequence AEMSDSSGVDSATA.

This sequence belongs to the PLPL family.

The protein localises to the membrane. Functionally, probable lipid hydrolase. The chain is Patatin-like phospholipase domain-containing protein ATEG_02594 from Aspergillus terreus (strain NIH 2624 / FGSC A1156).